Here is a 1107-residue protein sequence, read N- to C-terminus: Copine family protein 1 (1107 aa).

Over 1 to 22 the chain is Extracellular; the sequence is MVFDARLGYDPDEWEECPEPEH. The chain crosses the membrane as a helical span at residues 23–45; the sequence is FLVFSGFTRYMLTFAAIAFVYYF. Topologically, residues 46–1107 are cytoplasmic; it reads FKLLDDKNKK…IRREMMHNPL (1062 aa). Positions 67 to 124 form a coiled coil; that stretch reads VESVLAKAGDKLHDVKEQVQQHIPESAEELMREADQYLKEQAHSVQNNVHQFAEQAAN. Low complexity predominate over residues 478–488; sequence QLQQNQQQHQQ. Disordered regions lie at residues 478 to 501 and 673 to 698; these read QLQQNQQQHQQPSAIDRRRTTADS and HEPETGSNKKKLTPKNPSFEATSRQV. Basic and acidic residues predominate over residues 492–501; sequence IDRRRTTADS. A compositionally biased stretch (polar residues) spans 687-698; it reads KNPSFEATSRQV. The region spanning 863 to 1023 is the VWFA domain; it reads NLIFGIDYTA…LSIIVVGVGD (161 aa).

This sequence belongs to the copine family. As to quaternary structure, may interact (via VWFA domain) with unc-89 (via Ig-like C2-type 1-3) and unc-96 (via C-terminus); cpna-1 binding sites for unc-89 and unc-96 are different. May interact with pat-6. May interact with lim-9 (via LIM domains) and with scpl-1 (via FCP1 homology domain). In terms of tissue distribution, expressed in body wall muscles (at protein level).

Its subcellular location is the basal cell membrane. The protein localises to the cytoplasm. It is found in the myofibril. It localises to the sarcomere. The protein resides in the m line. Functionally, involved in the assembly of dense bodies and M lines during body wall muscle development. Acts by recruiting downstream of integrin-associated protein pat-6/actopaxin several dense bodies and M line components including unc-89, lim-9, scpl-1 and unc-96 to integrin-mediated attachment sites. The sequence is that of Copine family protein 1 from Caenorhabditis elegans.